Reading from the N-terminus, the 523-residue chain is MTSVLFMVGVLLGAFGSTHCSIQIVFPSETKLVWKPVLKGTRYCPQSAELNLEPDLKTMAFDSKVPIGITPSNSDGYLCHAAKWVTTCDFRWYGPKYITHSVHSLRPTVSDCKAAVEAYNAGTLMYPGFPPESCGYASITDSEFYVMLVTPHPVGVDDYRGHWVDPLFPTSECNSNFCETVHNATMWIPKDLKTHDVCSQDFQTIRVSVMYPQTKPTKGADLTLKSKFHAHMKGDRVCKMKFCNKNGLRLGNGEWIEVGDEVMLDNSKLLSLFPDCLVGSVVKSTLLSEGVQTALWETDRLLDYSLCQNTWEKIDRKEPLSAVDLSYLAPRSPGKGMAYIVANGSLMSAPARYIRVWIDSPILKEIKGKKESASGIDTVLWEQWLPFNGMELGPNGLIKTKSGYKFPLYLLGMGIVDQDLQELSSVNPVDHPHVPIAQAFVSEGEEVFFGDTGVSKNPIELISGWFSDWKETAAALGFAAISVILIIGLMRLLPLLCRRRKQKKVIYKDVELNSFDPRQAFHR.

The signal sequence occupies residues 1-20; the sequence is MTSVLFMVGVLLGAFGSTHC. Over 21–475 the chain is Virion surface; sequence SIQIVFPSET…FSDWKETAAA (455 aa). Disulfide bonds link cysteine 44/cysteine 307, cysteine 79/cysteine 112, cysteine 88/cysteine 134, cysteine 173/cysteine 178, cysteine 198/cysteine 243, and cysteine 238/cysteine 276. The interval 57–176 is fusion peptide; sequence KTMAFDSKVP…LFPTSECNSN (120 aa). A glycan (N-linked (GlcNAc...) asparagine; by host) is linked at asparagine 183. The interval 262 to 316 is trimerization; the sequence is VMLDNSKLLSLFPDCLVGSVVKSTLLSEGVQTALWETDRLLDYSLCQNTWEKIDR. A glycan (N-linked (GlcNAc...) asparagine; by host) is linked at asparagine 343. The interval 391–413 is trimerization; it reads ELGPNGLIKTKSGYKFPLYLLGM. Residues 476–496 traverse the membrane as a helical segment; the sequence is LGFAAISVILIIGLMRLLPLL. The S-palmitoyl cysteine; by host moiety is linked to residue cysteine 497. The Intravirion portion of the chain corresponds to 497 to 523; that stretch reads CRRRKQKKVIYKDVELNSFDPRQAFHR.

This sequence belongs to the vesiculovirus glycoprotein family. Homotrimer. Interacts with host LDL at target cell surface. Glycosylated by host. Palmitoylated by host.

The protein resides in the virion membrane. Its subcellular location is the host membrane. Its function is as follows. Attaches the virus to host receptors, inducing clathrin-dependent endocytosis of the virion. In the endosome, the acidic pH induces conformational changes in the glycoprotein trimer, which trigger fusion between virus and endosomal membrane. This Gerbillinae (gerbils) protein is Glycoprotein (G).